The primary structure comprises 391 residues: 3-ketoacyl-CoA thiolase (391 aa).

Cysteine 95 serves as the catalytic Acyl-thioester intermediate. Catalysis depends on proton acceptor residues histidine 347 and cysteine 377.

The protein belongs to the thiolase-like superfamily. Thiolase family. Heterotetramer of two alpha chains (FadB) and two beta chains (FadA).

The protein localises to the cytoplasm. It carries out the reaction an acyl-CoA + acetyl-CoA = a 3-oxoacyl-CoA + CoA. It functions in the pathway lipid metabolism; fatty acid beta-oxidation. Functionally, catalyzes the final step of fatty acid oxidation in which acetyl-CoA is released and the CoA ester of a fatty acid two carbons shorter is formed. This chain is 3-ketoacyl-CoA thiolase, found in Pseudomonas aeruginosa (strain UCBPP-PA14).